The primary structure comprises 292 residues: 11-beta-hydroxysteroid dehydrogenase 1 (292 aa).

Residues 1–7 are Cytoplasmic-facing; the sequence is MAFMKKY. A helical; Signal-anchor for type II membrane protein transmembrane segment spans residues 8–24; the sequence is LLPILGIFLAYYYYSAN. Residues 25-292 lie on the Lumenal side of the membrane; sequence EEFRPEMLRG…KYNMERFINN (268 aa). NADP(+) contacts are provided by residues 41–67 and 92–93; these read GASK…TARS and TM. N95 is a glycosylation site (N-linked (GlcNAc...) asparagine). 119-121 is a binding site for NADP(+); sequence NHI. S170 contributes to the substrate binding site. Y183 (proton acceptor) is an active-site residue. An NADP(+)-binding site is contributed by 183 to 187; it reads YSASK. N-linked (GlcNAc...) asparagine glycosylation is present at N207. Residues 216–222 and 218–222 contribute to the NADP(+) site; these read GLIDTDT and IDTDT.

It belongs to the short-chain dehydrogenases/reductases (SDR) family. In terms of assembly, homodimer. In terms of tissue distribution, liver, kidney, lung, hypothalamus, anterior pituitary and placenta.

It is found in the endoplasmic reticulum membrane. It catalyses the reaction an 11beta-hydroxysteroid + NADP(+) = an 11-oxosteroid + NADPH + H(+). The catalysed reaction is corticosterone + NADP(+) = 11-dehydrocorticosterone + NADPH + H(+). It carries out the reaction cortisone + NADPH + H(+) = cortisol + NADP(+). The enzyme catalyses a 7beta-hydroxysteroid + NADP(+) = a 7-oxosteroid + NADPH + H(+). It catalyses the reaction 7-oxocholesterol + NADPH + H(+) = 7beta-hydroxycholesterol + NADP(+). The catalysed reaction is chenodeoxycholate + NADP(+) = 7-oxolithocholate + NADPH + H(+). It carries out the reaction 7-oxolithocholate + NADPH + H(+) = ursodeoxycholate + NADP(+). The enzyme catalyses glycochenodeoxycholate + NADP(+) = 7-oxoglycolithocholate + NADPH + H(+). It catalyses the reaction taurochenodeoxycholate + NADP(+) = 7-oxotaurolithocholate + NADPH + H(+). The catalysed reaction is tauroursodeoxycholate + NADP(+) = 7-oxotaurolithocholate + NADPH + H(+). It carries out the reaction glycoursodeoxycholate + NADP(+) = 7-oxoglycolithocholate + NADPH + H(+). The enzyme catalyses 7-oxopregnenolone + NADPH + H(+) = 7beta-hydroxypregnenolone + NADP(+). It catalyses the reaction 3beta,7alpha-dihydroxyandrost-5-en-17-one + NADP(+) = 3beta-hydroxy-5-androstene-7,17-dione + NADPH + H(+). The catalysed reaction is 3beta-hydroxy-5-androstene-7,17-dione + NADPH + H(+) = 3beta,7beta-dihydroxyandrost-5-en-17-one + NADP(+). It carries out the reaction 3beta-hydroxy-5alpha-androstane-7,17-dione + NADPH + H(+) = 3beta,7beta-dihydroxy-5alpha-androstan-17-one + NADP(+). In terms of biological role, controls the reversible conversion of biologically active glucocorticoids such as cortisone to cortisol, and 11-dehydrocorticosterone to corticosterone in the presence of NADP(H). Participates in the corticosteroid receptor-mediated anti-inflammatory response, as well as metabolic and homeostatic processes. Plays a role in the secretion of aqueous humor in the eye, maintaining a normotensive, intraocular environment. Bidirectional in vitro, predominantly functions as a reductase in vivo, thereby increasing the concentration of active glucocorticoids. It has broad substrate specificity, besides glucocorticoids, it accepts other steroid and sterol substrates. Interconverts 7-oxo- and 7-hydroxy-neurosteroids such as 7-oxopregnenolone and 7beta-hydroxypregnenolone, 7-oxodehydroepiandrosterone (3beta-hydroxy-5-androstene-7,17-dione) and 7beta-hydroxydehydroepiandrosterone (3beta,7beta-dihydroxyandrost-5-en-17-one), among others. Catalyzes the stereo-specific conversion of the major dietary oxysterol, 7-ketocholesterol (7-oxocholesterol), into the more polar 7-beta-hydroxycholesterol metabolite. 7-oxocholesterol is one of the most important oxysterols, it participates in several events such as induction of apoptosis, accumulation in atherosclerotic lesions, lipid peroxidation, and induction of foam cell formation. Mediates the 7-oxo reduction of 7-oxolithocholate mainly to chenodeoxycholate, and to a lesser extent to ursodeoxycholate, both in its free form and when conjugated to glycine or taurine, providing a link between glucocorticoid activation and bile acid metabolism. Catalyzes the synthesis of 7-beta-25-dihydroxycholesterol from 7-oxo-25-hydroxycholesterol in vitro, which acts as a ligand for the G-protein-coupled receptor (GPCR) Epstein-Barr virus-induced gene 2 (EBI2) and may thereby regulate immune cell migration. In Ovis aries (Sheep), this protein is 11-beta-hydroxysteroid dehydrogenase 1 (HSD11B1).